Reading from the N-terminus, the 368-residue chain is MNPMLTNNSQPSNYTAGNAKGKIKKLRSACDACHASKVRCSGEPICARCQRDNVACHYSYRAHQGKPKGSLNRKTIERMKAAGFIEQRQRPAASQPPGHGTSRDSSVCASGTTTDNLLNFIEIQPPGESNESPVAIHATPSPCFAMTGGLLPDFDAANLDAFLEAYQTPEDSCLRAVEEFPGASPADMDCIFIGTPSSMSRDYTEVATCRCVREITQQINNVHAASADRSTTGLDDVLHYTREISACISGLLQCYSCGGQVQVFVLASVVLSLLMELMHPLLDSSTDTSRPRAQIRVGNYDMSGQLGDVLEKVIVRSIITKLRQVVDKFEMKADFLRSETAQAEFLKSEARRLKRGFGRIEEGTATLP.

The zn(2)-C6 fungal-type DNA-binding region spans 30 to 56; sequence CDACHASKVRCSGEPICARCQRDNVAC. The interval 84-109 is disordered; that stretch reads FIEQRQRPAASQPPGHGTSRDSSVCA.

The protein localises to the nucleus. Its function is as follows. Transcription factor that specifically regulates the thioclapurine biosynthesis gene cluster. This is C6 finger domain transcription factor tcpZ from Claviceps purpurea (strain 20.1) (Ergot fungus).